Consider the following 291-residue polypeptide: Shikimate dehydrogenase (NADP(+)) (291 aa).

Residues 23 to 25 (SFS) and threonine 70 each bind shikimate. Lysine 74 (proton acceptor) is an active-site residue. The shikimate site is built by asparagine 95 and aspartate 110. NADP(+) contacts are provided by residues 135-139 (GAGGA) and leucine 232. Tyrosine 234 serves as a coordination point for shikimate. Residue glycine 255 coordinates NADP(+).

Belongs to the shikimate dehydrogenase family. As to quaternary structure, homodimer.

It carries out the reaction shikimate + NADP(+) = 3-dehydroshikimate + NADPH + H(+). Its pathway is metabolic intermediate biosynthesis; chorismate biosynthesis; chorismate from D-erythrose 4-phosphate and phosphoenolpyruvate: step 4/7. Its function is as follows. Involved in the biosynthesis of the chorismate, which leads to the biosynthesis of aromatic amino acids. Catalyzes the reversible NADPH linked reduction of 3-dehydroshikimate (DHSA) to yield shikimate (SA). The protein is Shikimate dehydrogenase (NADP(+)) of Desulforamulus reducens (strain ATCC BAA-1160 / DSM 100696 / MI-1) (Desulfotomaculum reducens).